The chain runs to 955 residues: Translation initiation factor IF-2 (955 aa).

The disordered stretch occupies residues 49–352; sequence AFSQSSESTE…QAPSFGGVKI (304 aa). Low complexity predominate over residues 77-88; sequence PQQQTKASAPSA. 4 stretches are compositionally biased toward pro residues: residues 95-121, 149-159, 188-202, and 209-223; these read PAVP…PGPR, RPVPKPGPRPG, RPGP…PPRP, and PPRP…PRPG. Gly residues predominate over residues 225–235; the sequence is GTAGGRPGSSA. Residues 238 to 264 are compositionally biased toward pro residues; the sequence is PPRPVPRPGPRPSPMNMPASRPTPPGG. Positions 273–322 are enriched in gly residues; the sequence is SGGGRGRGGGGGAGPRGGGAGGGAPRTGFGGRPGGGRGRGGTAGAFGRPG. The segment covering 326 to 335 has biased composition (basic residues); the sequence is SRSRKSKKQR. Residues 448 to 620 enclose the tr-type G domain; the sequence is PRAPVVTVMG…IILTADAELD (173 aa). Residues 457 to 464 are G1; it reads GHVDHGKT. 457–464 contacts GTP; sequence GHVDHGKT. The segment at 482–486 is G2; sequence GITQH. The interval 507-510 is G3; the sequence is DTPG. Residues 507 to 511 and 561 to 564 each bind GTP; these read DTPGH and NKID. Residues 561-564 form a G4 region; it reads NKID. The tract at residues 597–599 is G5; the sequence is SAK.

It belongs to the TRAFAC class translation factor GTPase superfamily. Classic translation factor GTPase family. IF-2 subfamily.

The protein resides in the cytoplasm. One of the essential components for the initiation of protein synthesis. Protects formylmethionyl-tRNA from spontaneous hydrolysis and promotes its binding to the 30S ribosomal subunits. Also involved in the hydrolysis of GTP during the formation of the 70S ribosomal complex. The chain is Translation initiation factor IF-2 from Thermobifida fusca (strain YX).